A 251-amino-acid polypeptide reads, in one-letter code: MSDALPMSPAEFEQALRAKGAYYHIHHPYHVAMYQGRATREQIQGWVANRFYYQVNIPMKDAAILANCPDREVRREWIQRLLDHDGAPGEDGGIEAWLRLGQAVGLDPDQLRSQELVLPGVRFAVDAYVNFARRASWQEAASSSLTELFAPQIHQSRLDSWPQHYPWIDPAGYEYFRTRLGQARRDVEHGLAITLQHYTTRAGQERMLEILQFKLDILWSMLDAMSMAYELNRPPYHSVTQDRVWHKGITL.

The protein belongs to the PqqC family.

The catalysed reaction is 6-(2-amino-2-carboxyethyl)-7,8-dioxo-1,2,3,4,7,8-hexahydroquinoline-2,4-dicarboxylate + 3 O2 = pyrroloquinoline quinone + 2 H2O2 + 2 H2O + H(+). The protein operates within cofactor biosynthesis; pyrroloquinoline quinone biosynthesis. Its function is as follows. Ring cyclization and eight-electron oxidation of 3a-(2-amino-2-carboxyethyl)-4,5-dioxo-4,5,6,7,8,9-hexahydroquinoline-7,9-dicarboxylic-acid to PQQ. In Pseudomonas putida (strain GB-1), this protein is Pyrroloquinoline-quinone synthase.